The following is a 315-amino-acid chain: tRNA pseudouridine synthase B (315 aa).

Substrate is bound at residue His42. Residue Asp47 is the Nucleophile of the active site. Residues Tyr75, Tyr178, and Leu199 each coordinate substrate.

Belongs to the pseudouridine synthase TruB family. Type 1 subfamily.

The catalysed reaction is uridine(55) in tRNA = pseudouridine(55) in tRNA. Its function is as follows. Responsible for synthesis of pseudouridine from uracil-55 in the psi GC loop of transfer RNAs. In Photorhabdus laumondii subsp. laumondii (strain DSM 15139 / CIP 105565 / TT01) (Photorhabdus luminescens subsp. laumondii), this protein is tRNA pseudouridine synthase B.